The sequence spans 432 residues: Adenosylhomocysteinase (432 aa).

N-acetylserine is present on serine 2. Residues threonine 57, aspartate 131, and glutamate 156 each coordinate substrate. NAD(+) is bound at residue 157–159 (TTT). Serine 183 carries the post-translational modification Phosphoserine. Residues lysine 186 and aspartate 190 each contribute to the substrate site. Lysine 186 is subject to N6-(2-hydroxyisobutyryl)lysine. Tyrosine 193 carries the phosphotyrosine modification. NAD(+)-binding positions include 222–227 (GDVGKG), glutamate 243, asparagine 248, 299–301 (IGH), asparagine 346, and histidine 353.

Belongs to the adenosylhomocysteinase family. As to quaternary structure, homotetramer. Interaction with AHCYL1. Requires NAD(+) as cofactor.

It is found in the cytoplasm. The protein localises to the melanosome. The protein resides in the nucleus. Its subcellular location is the endoplasmic reticulum. The catalysed reaction is S-adenosyl-L-homocysteine + H2O = L-homocysteine + adenosine. It participates in amino-acid biosynthesis; L-homocysteine biosynthesis; L-homocysteine from S-adenosyl-L-homocysteine: step 1/1. Functionally, catalyzes the hydrolysis of S-adenosyl-L-homocysteine to form adenosine and homocysteine. Binds copper ions. This is Adenosylhomocysteinase (AHCY) from Homo sapiens (Human).